A 90-amino-acid chain; its full sequence is uncharacterized protein (90 aa).

The helical transmembrane segment at 46–62 (MALLVVFLVSLFACTTI) threads the bilayer.

The protein localises to the membrane. This is an uncharacterized protein from Haemophilus influenzae (strain ATCC 51907 / DSM 11121 / KW20 / Rd).